The sequence spans 373 residues: MQHESPIIRRKSTRIYVGDVPIGDGAPIAVQSMTNTRTTDVAATVAQIRALEKVGADIVRVSVPTMDAAEAFKLIKQQVSVPLVADIHFDYRIALKVAEYGVDCLRINPGNIGNESRIRSVVDCARDMNIPIRIGVNGGSLEKEIQEKYTEPTAEALVESAMRHVDILDRLNFDQFKVSVKASDVFLAVGSYRLLAKQIDQPLHLGITEAGGARAGSVKSAVGLGMLLSEGIGDTLRISLAADPVEEIKVGFDILKSLRIRSRGINFIACPSCSRQEFDVINTVNALEERLEDVITPMDVSIIGCVVNGPGEAEVSHLGLAGSARKSAFYEDGKRQKERFDNDDLVDKLEAKIRAKASVLDKANRIDVENLED.

[4Fe-4S] cluster contacts are provided by Cys270, Cys273, Cys305, and Glu312.

The protein belongs to the IspG family. [4Fe-4S] cluster is required as a cofactor.

It carries out the reaction (2E)-4-hydroxy-3-methylbut-2-enyl diphosphate + oxidized [flavodoxin] + H2O + 2 H(+) = 2-C-methyl-D-erythritol 2,4-cyclic diphosphate + reduced [flavodoxin]. The protein operates within isoprenoid biosynthesis; isopentenyl diphosphate biosynthesis via DXP pathway; isopentenyl diphosphate from 1-deoxy-D-xylulose 5-phosphate: step 5/6. Functionally, converts 2C-methyl-D-erythritol 2,4-cyclodiphosphate (ME-2,4cPP) into 1-hydroxy-2-methyl-2-(E)-butenyl 4-diphosphate. The sequence is that of 4-hydroxy-3-methylbut-2-en-1-yl diphosphate synthase (flavodoxin) from Vibrio atlanticus (strain LGP32) (Vibrio splendidus (strain Mel32)).